The following is a 146-amino-acid chain: Mite group 2 allergen Der p 2 (146 aa).

An N-terminal signal peptide occupies residues 1–17 (MMYKILCLSLLVAAVAR). Disulfide bonds link Cys25–Cys136, Cys38–Cys44, and Cys90–Cys95.

The protein belongs to the NPC2 family.

The protein localises to the secreted. In Dermatophagoides pteronyssinus (European house dust mite), this protein is Mite group 2 allergen Der p 2 (DERP2).